The chain runs to 420 residues: Arginine biosynthesis bifunctional protein ArgJ (420 aa).

Substrate contacts are provided by Thr167, Lys193, Thr204, Glu284, Asn415, and Thr420. Thr204 serves as the catalytic Nucleophile.

This sequence belongs to the ArgJ family. As to quaternary structure, heterotetramer of two alpha and two beta chains.

It is found in the cytoplasm. The catalysed reaction is N(2)-acetyl-L-ornithine + L-glutamate = N-acetyl-L-glutamate + L-ornithine. It carries out the reaction L-glutamate + acetyl-CoA = N-acetyl-L-glutamate + CoA + H(+). The protein operates within amino-acid biosynthesis; L-arginine biosynthesis; L-ornithine and N-acetyl-L-glutamate from L-glutamate and N(2)-acetyl-L-ornithine (cyclic): step 1/1. It participates in amino-acid biosynthesis; L-arginine biosynthesis; N(2)-acetyl-L-ornithine from L-glutamate: step 1/4. Catalyzes two activities which are involved in the cyclic version of arginine biosynthesis: the synthesis of N-acetylglutamate from glutamate and acetyl-CoA as the acetyl donor, and of ornithine by transacetylation between N(2)-acetylornithine and glutamate. This chain is Arginine biosynthesis bifunctional protein ArgJ, found in Prochlorococcus marinus (strain NATL2A).